The primary structure comprises 878 residues: Leucine--tRNA ligase (878 aa).

Over residues 1–14 (MTASKSSSATASAS) the composition is skewed to low complexity. The disordered stretch occupies residues 1 to 23 (MTASKSSSATASASDRPDRYDPI). The 'HIGH' region motif lies at 58–68 (PYPSGSLHMGH). The short motif at 632-636 (KMSKS) is the 'KMSKS' region element. Lys635 is an ATP binding site.

The protein belongs to the class-I aminoacyl-tRNA synthetase family.

Its subcellular location is the cytoplasm. The catalysed reaction is tRNA(Leu) + L-leucine + ATP = L-leucyl-tRNA(Leu) + AMP + diphosphate. The sequence is that of Leucine--tRNA ligase from Synechococcus sp. (strain WH7803).